The following is a 95-amino-acid chain: Fungal defensin plectasin (95 aa).

The first 23 residues, 1–23 (MQFTTILSIGITVFGLLNTGAFA), serve as a signal peptide directing secretion. A propeptide spanning residues 24–55 (APQPVPEAYAVSDPEAHPDDFAGMDANQLQKR) is cleaved from the precursor. Residues F57, G58, and C59 each coordinate beta-D-GlcNAc-(1-&gt;4)-Mur2Ac(oyl-L-Ala-gamma-D-Glu-L-Lys-D-Ala-D-Ala)-di-trans,octa-cis-undecaprenyl diphosphate. Intrachain disulfides connect C59-C85, C70-C92, and C74-C94. A binds to membrane interface region spans residues 61–64 (GPWD). Residues D67, H73, Y84, A86, G88, C92, and K93 each contribute to the beta-D-GlcNAc-(1-&gt;4)-Mur2Ac(oyl-L-Ala-gamma-D-Glu-L-Lys-D-Ala-D-Ala)-di-trans,octa-cis-undecaprenyl diphosphate site. The interval 86–92 (AKGGFVC) is binds to membrane interface.

The protein belongs to the invertebrate defensin family. Type 2 subfamily.

The protein resides in the secreted. It localises to the host cell membrane. Its function is as follows. Antimicrobial peptide that potently acts against several species of Gram-positive bacteria. It selectively inhibits peptidoglycan biosynthesis through complex formation with the cell wall precursor lipid II (1:1 molar ratio) thus inhibiting cell wall synthesis. It does not disrupt cell membranes. Is especially active against numerous clinical isolates of S.pneumoniae, including all 90 different serotypes and isolates resistant to clinically used antibiotics. In vitro, shows considerable selectivity for bacteria over mammalian cells. The peptide synthesized in D-amino acids does not show antibacterial activity. In vitro, acts on voltage-gated potassium channels by moderately inhibiting mammalian Kv1.3/KCNA3 (IC(50)=2.8 uM), and moderately inhibiting others potassium channels. This Pseudoplectania nigrella (Ebony cup) protein is Fungal defensin plectasin (DEF).